Reading from the N-terminus, the 421-residue chain is Serine--tRNA ligase (421 aa).

Residue 231-233 participates in L-serine binding; that stretch reads TGE. Position 262-264 (262-264) interacts with ATP; the sequence is RRE. L-serine is bound at residue glutamate 285. 349–352 is a binding site for ATP; sequence EVSS. An L-serine-binding site is contributed by serine 384.

Belongs to the class-II aminoacyl-tRNA synthetase family. Type-1 seryl-tRNA synthetase subfamily. In terms of assembly, homodimer. The tRNA molecule binds across the dimer.

Its subcellular location is the cytoplasm. The enzyme catalyses tRNA(Ser) + L-serine + ATP = L-seryl-tRNA(Ser) + AMP + diphosphate + H(+). It carries out the reaction tRNA(Sec) + L-serine + ATP = L-seryl-tRNA(Sec) + AMP + diphosphate + H(+). It functions in the pathway aminoacyl-tRNA biosynthesis; selenocysteinyl-tRNA(Sec) biosynthesis; L-seryl-tRNA(Sec) from L-serine and tRNA(Sec): step 1/1. Functionally, catalyzes the attachment of serine to tRNA(Ser). Is also able to aminoacylate tRNA(Sec) with serine, to form the misacylated tRNA L-seryl-tRNA(Sec), which will be further converted into selenocysteinyl-tRNA(Sec). The protein is Serine--tRNA ligase of Methylacidiphilum infernorum (isolate V4) (Methylokorus infernorum (strain V4)).